The following is a 486-amino-acid chain: Glutamate--tRNA ligase 1 (486 aa).

Residues 9–19 (PSPTGMLHIGG) carry the 'HIGH' region motif. Positions 259 to 263 (KLSKR) match the 'KMSKS' region motif. Position 262 (lysine 262) interacts with ATP.

The protein belongs to the class-I aminoacyl-tRNA synthetase family. Glutamate--tRNA ligase type 1 subfamily. Monomer.

It localises to the cytoplasm. The enzyme catalyses tRNA(Glu) + L-glutamate + ATP = L-glutamyl-tRNA(Glu) + AMP + diphosphate. Catalyzes the attachment of glutamate to tRNA(Glu) in a two-step reaction: glutamate is first activated by ATP to form Glu-AMP and then transferred to the acceptor end of tRNA(Glu). The sequence is that of Glutamate--tRNA ligase 1 from Hyphomonas neptunium (strain ATCC 15444).